Here is a 500-residue protein sequence, read N- to C-terminus: Metal transporter Nramp3.1 (500 aa).

Transmembrane regions (helical) follow at residues 51 to 71, 79 to 99, 128 to 148, 160 to 180, 188 to 208, 234 to 254, 280 to 300, 322 to 342, 370 to 390, 401 to 421, 439 to 459, and 467 to 487; these read LWLF…PGNL, AIAG…GLLV, MILW…EVIG, VLPL…FLFL, LEAA…WMFA, AVGV…SALV, AALA…AKGF, YGGG…AAGQ, ALIT…VFDT, WLNM…LCLV, VSWL…LDFF, and VFTT…IYLI.

It belongs to the NRAMP (TC 2.A.55) family. As to expression, expressed in roots, stems, buds and leaves.

Its subcellular location is the golgi apparatus. It is found in the trans-Golgi network membrane. The catalysed reaction is Mn(2+)(in) = Mn(2+)(out). It catalyses the reaction Fe(2+)(in) = Fe(2+)(out). Its function is as follows. Divalent metal transporter. Can transport manganese (Mn) and iron (Fe). Involved in the control of cell-to-cell transport of manganese (Mn) between organs and tissues to monitor Mn homeostasis. This Populus trichocarpa (Western balsam poplar) protein is Metal transporter Nramp3.1.